A 393-amino-acid chain; its full sequence is 8-amino-7-oxononanoate synthase (393 aa).

108–109 (GF) contacts pyridoxal 5'-phosphate. Position 133 (His-133) interacts with substrate. Residues Ser-182, 207-210 (DDAH), and 238-241 (TLSK) each bind pyridoxal 5'-phosphate. Lys-241 carries the N6-(pyridoxal phosphate)lysine modification. Substrate is bound at residue Thr-355.

This sequence belongs to the class-II pyridoxal-phosphate-dependent aminotransferase family. BioF subfamily. Homodimer. Pyridoxal 5'-phosphate is required as a cofactor.

It carries out the reaction 6-carboxyhexanoyl-[ACP] + L-alanine + H(+) = (8S)-8-amino-7-oxononanoate + holo-[ACP] + CO2. It participates in cofactor biosynthesis; biotin biosynthesis. Functionally, catalyzes the decarboxylative condensation of pimeloyl-[acyl-carrier protein] and L-alanine to produce 8-amino-7-oxononanoate (AON), [acyl-carrier protein], and carbon dioxide. The chain is 8-amino-7-oxononanoate synthase from Petrotoga mobilis (strain DSM 10674 / SJ95).